The chain runs to 281 residues: Cell growth regulator with EF hand domain protein 1 (281 aa).

Positions 1–21 (MFQWLMQALMLPLLLLPLGRA) are cleaved as a signal peptide. 2 EF-hand domains span residues 71-106 (DREQ…ALAP) and 115-150 (PVIL…PKHT). 9 residues coordinate Ca(2+): aspartate 84, aspartate 86, asparagine 88, glutamine 90, glutamate 95, aspartate 128, aspartate 130, aspartate 132, and glutamate 139. The interval 148–281 (KHTESLPPAL…HSIQLENDEI (134 aa)) is disordered. The span at 168-183 (LLANSPLQSETQQSLG) shows a compositional bias: polar residues. Over residues 184-213 (TKEEIRGQVEAKRASLEPEQEAGHQTEGKV) the composition is skewed to basic and acidic residues. Serine 217 and serine 228 each carry phosphoserine. Basic and acidic residues predominate over residues 237-256 (EGAEEQVEIKDNEGEAKELL).

In terms of processing, probably digested extracellularly by an unknown serine protease generating extremely hydrophobic bioactive peptides.

It is found in the secreted. Functionally, mediates cell-cell adhesion in a calcium-dependent manner. Able to inhibit growth in several cell lines. The protein is Cell growth regulator with EF hand domain protein 1 of Mus musculus (Mouse).